Reading from the N-terminus, the 328-residue chain is Pyruvate dehydrogenase E1 component subunit beta (328 aa).

E60 contributes to the thiamine diphosphate binding site. K(+)-binding residues include I113, I162, and N166.

In terms of assembly, heterodimer of an alpha and a beta chain. Thiamine diphosphate is required as a cofactor.

The protein resides in the plastid. It localises to the chloroplast. It carries out the reaction N(6)-[(R)-lipoyl]-L-lysyl-[protein] + pyruvate + H(+) = N(6)-[(R)-S(8)-acetyldihydrolipoyl]-L-lysyl-[protein] + CO2. The pyruvate dehydrogenase complex catalyzes the overall conversion of pyruvate to acetyl-CoA and CO(2). It contains multiple copies of three enzymatic components: pyruvate dehydrogenase (E1), dihydrolipoamide acetyltransferase (E2) and lipoamide dehydrogenase (E3). The polypeptide is Pyruvate dehydrogenase E1 component subunit beta (pdhB) (Staurastrum punctulatum (Green alga)).